The following is a 124-amino-acid chain: uncharacterized protein (124 aa).

The protein localises to the cytoplasm. Its subcellular location is the nucleus. This is an uncharacterized protein from Schizosaccharomyces pombe (strain 972 / ATCC 24843) (Fission yeast).